The chain runs to 222 residues: NADH dehydrogenase [ubiquinone] iron-sulfur protein 8-A, mitochondrial (222 aa).

2 consecutive 4Fe-4S ferredoxin-type domains span residues 114–143 (RRYP…IEAE) and 153–182 (TRYD…EGPN). Residues Cys123, Cys126, Cys129, Cys133, Cys162, Cys165, Cys168, and Cys172 each contribute to the [4Fe-4S] cluster site.

This sequence belongs to the complex I 23 kDa subunit family. In terms of assembly, complex I is composed of at least 49 different subunits. This is a component of the iron-sulfur (IP) fragment of the enzyme. [4Fe-4S] cluster serves as cofactor.

The protein resides in the mitochondrion. It catalyses the reaction a ubiquinone + NADH + 5 H(+)(in) = a ubiquinol + NAD(+) + 4 H(+)(out). Core subunit of the mitochondrial membrane respiratory chain NADH dehydrogenase (Complex I) that is believed to belong to the minimal assembly required for catalysis. Complex I functions in the transfer of electrons from NADH to the respiratory chain. The immediate electron acceptor for the enzyme is believed to be ubiquinone. May donate electrons to ubiquinone. In Arabidopsis thaliana (Mouse-ear cress), this protein is NADH dehydrogenase [ubiquinone] iron-sulfur protein 8-A, mitochondrial.